Here is a 138-residue protein sequence, read N- to C-terminus: RutC family protein UK114 (138 aa).

It belongs to the RutC family.

In terms of biological role, molecular chaperone. Seems to fulfill an ATP-independent, HSP70-like function in protein folding. May protect essential factors of cell proliferation during heat shock. No role in calpain activation. This chain is RutC family protein UK114, found in Drosophila melanogaster (Fruit fly).